The following is a 254-amino-acid chain: Tabinhibitin 6 (254 aa).

An N-terminal signal peptide occupies residues 1–22; it reads MLPYWCPLLLAALVLQYATIDA. Positions 31–33 match the Cell attachment site motif; it reads RGD. Residues 66-210 form the SCP domain; it reads LSKINDVRDH…KARALLTCNF (145 aa).

This sequence belongs to the CRISP family. As to expression, expressed in salivary glands.

It is found in the secreted. In terms of biological role, inhibits platelet aggregation induced by all agonists tested (ADP, arachidonic acid, the thromboxane A2 analog U46619, thrombin, and snake venom snaclecs (TMVA that activates platelet through GPIB, and stejnulxin that specifically acts through GPVI (GP6))). May act by competing with fibrinogen for binding to glycoprotein IIb/IIIa (ITGA2B/ITGB3). This chain is Tabinhibitin 6, found in Tabanus yao (Horsefly).